The following is a 201-amino-acid chain: Natural cytotoxicity triggering receptor 3 (201 aa).

A signal peptide spans 1 to 18 (MAWMLLLILIMVHPGSCA). The 108-residue stretch at 19–126 (LWVSQPPEIR…VGTGNGTRLV (108 aa)) folds into the Ig-like domain. Over 19–135 (LWVSQPPEIR…VVEKEHPQLG (117 aa)) the chain is Extracellular. C39 and C108 are joined by a disulfide. N42 and N121 each carry an N-linked (GlcNAc...) asparagine glycan. The helical transmembrane segment at 136 to 156 (AGTVLLLRAGFYAVSFLSVAV) threads the bilayer. Topologically, residues 157–201 (GSTVYYQGKCLTWKGPRRQLPAVVPAPLPPPCGSSAQLLPPVPGG) are cytoplasmic.

The protein belongs to the natural cytotoxicity receptor (NCR) family. In terms of assembly, homodimer in the unliganted form. Interacts with CD3Z. Interacts with and is activated by binding to NCR3LG1. Interacts with and is activated by binding to BAG6. Interacts with and is inhibited by binding to LGALS3.

It localises to the cell membrane. In terms of biological role, cell membrane receptor of natural killer/NK cells that is activated by binding of extracellular ligands including BAG6 and NCR3LG1. Stimulates NK cells cytotoxicity toward neighboring cells producing these ligands. It controls, for instance, NK cells cytotoxicity against tumor cells. Engagement of NCR3 by BAG6 also promotes myeloid dendritic cells (DC) maturation, both through killing DCs that did not acquire a mature phenotype, and inducing the release by NK cells of TNFA and IFNG that promote DC maturation. This chain is Natural cytotoxicity triggering receptor 3 (NCR3), found in Pan troglodytes (Chimpanzee).